Consider the following 58-residue polypeptide: Large ribosomal subunit protein uL30 (58 aa).

The protein belongs to the universal ribosomal protein uL30 family. As to quaternary structure, part of the 50S ribosomal subunit.

In Zymomonas mobilis subsp. mobilis (strain ATCC 31821 / ZM4 / CP4), this protein is Large ribosomal subunit protein uL30.